A 55-amino-acid chain; its full sequence is Large ribosomal subunit protein bL32 (55 aa).

A compositionally biased stretch (basic residues) spans 1-23 (MAVPKKKTSKAKRDQRRAHWKRK). Residues 1–26 (MAVPKKKTSKAKRDQRRAHWKRKATI) are disordered.

It belongs to the bacterial ribosomal protein bL32 family.

This chain is Large ribosomal subunit protein bL32, found in Picosynechococcus sp. (strain ATCC 27264 / PCC 7002 / PR-6) (Agmenellum quadruplicatum).